The chain runs to 328 residues: Probable cytosolic iron-sulfur protein assembly protein 1 (328 aa).

7 WD repeats span residues 12 to 49 (LHGDRCWSVDISKGLLATGSADRKIKLVDVRNFKLVEE), 54 to 93 (AHKKAVRSVAWRPHCNVLAAGSFDTTVSIWGRDDDDYSGE), 102 to 141 (GHENEVKSVAWSHDGAYLATCSRDKSVWIWEADELSEEFE), 148 to 187 (EHSQDVKHIVWHASRLLLASSSYDDTVRIWAEQDDDWECA), 192 to 233 (GHGG…ADVF), 246 to 284 (VHTRAVYSVSWSADGLIASVGSDGVLAVYKEVQAGRWEV), and 291 to 328 (AHTVYEINVVKWLALDGRVLLVTGGDDGCVNVWELREE).

Belongs to the WD repeat CIA1 family. In terms of assembly, interacts with NAR1.

The protein resides in the cytoplasm. Its subcellular location is the nucleus. In terms of biological role, essential component of the cytosolic iron-sulfur (Fe/S) protein assembly machinery. Required for the maturation of extramitochondrial Fe/S proteins. In Eremothecium gossypii (strain ATCC 10895 / CBS 109.51 / FGSC 9923 / NRRL Y-1056) (Yeast), this protein is Probable cytosolic iron-sulfur protein assembly protein 1.